A 145-amino-acid chain; its full sequence is MRTTYMAKPGEVERKWYVIDATGVSLGRLSSEVASILRGKNKPQFTPHIDTGDFVIIINAGKIGLTGKKATDKIYYRHSQYPGGLKSRTAGEMRTNNPEKLLELSIKGMLPKNSLGRQLFKKLHVYGGSEHEHAAQKPEVYELRG.

The protein belongs to the universal ribosomal protein uL13 family. Part of the 50S ribosomal subunit.

Functionally, this protein is one of the early assembly proteins of the 50S ribosomal subunit, although it is not seen to bind rRNA by itself. It is important during the early stages of 50S assembly. This Listeria innocua serovar 6a (strain ATCC BAA-680 / CLIP 11262) protein is Large ribosomal subunit protein uL13.